The following is a 177-amino-acid chain: ATP synthase subunit delta (177 aa).

Belongs to the ATPase delta chain family. In terms of assembly, F-type ATPases have 2 components, F(1) - the catalytic core - and F(0) - the membrane proton channel. F(1) has five subunits: alpha(3), beta(3), gamma(1), delta(1), epsilon(1). F(0) has three main subunits: a(1), b(2) and c(10-14). The alpha and beta chains form an alternating ring which encloses part of the gamma chain. F(1) is attached to F(0) by a central stalk formed by the gamma and epsilon chains, while a peripheral stalk is formed by the delta and b chains.

It is found in the cell inner membrane. In terms of biological role, f(1)F(0) ATP synthase produces ATP from ADP in the presence of a proton or sodium gradient. F-type ATPases consist of two structural domains, F(1) containing the extramembraneous catalytic core and F(0) containing the membrane proton channel, linked together by a central stalk and a peripheral stalk. During catalysis, ATP synthesis in the catalytic domain of F(1) is coupled via a rotary mechanism of the central stalk subunits to proton translocation. Functionally, this protein is part of the stalk that links CF(0) to CF(1). It either transmits conformational changes from CF(0) to CF(1) or is implicated in proton conduction. In Shigella flexneri, this protein is ATP synthase subunit delta.